The sequence spans 116 residues: Putative membrane protein (116 aa).

The helical transmembrane segment at 13-33 (VISIITFILVIAIFVIEIVSC) threads the bilayer.

The protein resides in the host membrane. In Alethinophid 1 reptarenavirus (isolate AlRrV1/Boa/USA/BC/2009) (Golden Gate virus), this protein is Putative membrane protein.